The primary structure comprises 400 residues: MSKEKIAIAYSGGLDTSIMIKWLKDKYDAEIVAVTGNLGQQKEIENLESKAIATGASAFQFVDLRKEFVEEYIWKALKAGALYEDVYPLATALGRPLLAKAIVDAALAEGCTMLAHGCTGKGNDQVRFEVTFASLAPHLKVLAPLREWEFTSREAEIAYALEHNIPVSATKKSPYSIDENIWGISIECGVLEDPMVAPPEDAYQITTSPENAPDRPTVVDIEFVQGVPVSLDGKTMSGLELIMKLNETGAANGVGRLDMIENRVVGIKSREIYEAPAATILHFAHRELERLTLEKTVFQYKKNISQDYANIIYNGLWFSPMRHALDAFIEETQKPVTGLVRVKLYKGSLSLLGRTSPNSLYNEELATYTEADTFNHKAAAGFIHLYGLGLKTFSEVNPAR.

An ATP-binding site is contributed by 9 to 17; the sequence is AYSGGLDTS. Tyr-87 contacts L-citrulline. Residue Gly-117 coordinates ATP. Residues Thr-119, Asn-123, and Asp-124 each contribute to the L-aspartate site. Asn-123 serves as a coordination point for L-citrulline. The L-citrulline site is built by Arg-127, Ser-176, Ser-185, Glu-261, and Tyr-273.

The protein belongs to the argininosuccinate synthase family. Type 1 subfamily. As to quaternary structure, homotetramer.

It localises to the cytoplasm. It carries out the reaction L-citrulline + L-aspartate + ATP = 2-(N(omega)-L-arginino)succinate + AMP + diphosphate + H(+). Its pathway is amino-acid biosynthesis; L-arginine biosynthesis; L-arginine from L-ornithine and carbamoyl phosphate: step 2/3. This chain is Argininosuccinate synthase, found in Chlorobium phaeobacteroides (strain DSM 266 / SMG 266 / 2430).